A 241-amino-acid polypeptide reads, in one-letter code: Phosphatidylcholine synthase (241 aa).

Topologically, residues 1–15 (MKFFNYRRVPYAEIR) are cytoplasmic. A helical transmembrane segment spans residues 16 to 36 (AFSVHILTASGSFLAFLGVVA). The Periplasmic portion of the chain corresponds to 37–41 (AAEHR). The helical transmembrane segment at 42–62 (FVDMFWWLGLALLVDGIDGPI) threads the bilayer. Residues 63 to 76 (ARKVQVKEVLPNWS) lie on the Cytoplasmic side of the membrane. A helical transmembrane segment spans residues 77–97 (GDTLDNVIDYVTYVLLPAFAL). At 98 to 100 (YQS) the chain is on the periplasmic side. A helical membrane pass occupies residues 101–121 (GMIGEPWSFVAAGAIVVSSAI). Topologically, residues 122–133 (YYADMGMKTDEY) are cytoplasmic. A helical membrane pass occupies residues 134-154 (FFSGFPVVWNMVVFTLFVIQA). The Periplasmic segment spans residues 155–156 (SE). Residues 157–177 (VTASIVVFLSVILTFLPINFL) traverse the membrane as a helical segment. Over 178–187 (HPVRVKRLRP) the chain is Cytoplasmic. The chain crosses the membrane as a helical span at residues 188 to 208 (LNLGIFLVWSVLGMYALLLHF). The Periplasmic portion of the chain corresponds to 209–211 (ETP). Residues 212–232 (PWVVVGVVATGLYLYVIGFIL) form a helical membrane-spanning segment. At 233-241 (QIFPKLGRA) the chain is on the cytoplasmic side.

Belongs to the CDP-alcohol phosphatidyltransferase class-I family. Mn(2+) serves as cofactor.

It localises to the cell inner membrane. It carries out the reaction a CDP-1,2-diacyl-sn-glycerol + choline = a 1,2-diacyl-sn-glycero-3-phosphocholine + CMP + H(+). With respect to regulation, activated by CDP-diacylglycerol especially in the presence of Triton X-100 (0.1% w/v) at concentrations where micelles are formed. Maximal activation by Triton X-100 at 0.2% w/v, but higher concentrations become inhibitory. Inhibited by EDTA and high concentrations of choline. Functionally, condenses choline with CDP-diglyceride to produce phosphatidylcholine and CMP. The polypeptide is Phosphatidylcholine synthase (pcs) (Rhizobium meliloti (strain 1021) (Ensifer meliloti)).